The chain runs to 282 residues: ABC transporter I family member 21 (282 aa).

One can recognise an ABC transporter domain in the interval 13–248 (IRVSGMQFSY…KTSPNLLSVV (236 aa)). 46-53 (GANGSGKT) serves as a coordination point for ATP.

Belongs to the ABC transporter superfamily. ABCI family. In terms of tissue distribution, expressed in root elongating zone and root meristem, as well as in elongating etiolated hypocotyls.

The protein resides in the cytoplasm. The chain is ABC transporter I family member 21 (ABCI21) from Arabidopsis thaliana (Mouse-ear cress).